The sequence spans 347 residues: Dual specificity mitogen-activated protein kinase kinase mek-1 (347 aa).

The segment at 1–42 is disordered; it reads MERDFDLGMGRPGGLGGLGGEPIMQQMPQPAPHHPSRSSNDH. Gly residues predominate over residues 10-20; the sequence is GRPGGLGGLGG. The 254-residue stretch at 72-325 folds into the Protein kinase domain; it reads LQFVEDIGHG…YDMLLQHPFV (254 aa). ATP is bound by residues 78–86 and Lys99; that span reads IGHGSCGTV. Asp193 functions as the Proton acceptor in the catalytic mechanism. Ser221 and Ser225 each carry phosphoserine.

Belongs to the protein kinase superfamily. STE Ser/Thr protein kinase family. MAP kinase kinase subfamily. Interacts with shc-1; the interaction is independent of mek-1 catalytic activity, is constitutive and may facilitate mlk-1-mediated phosphorylation by bringing mlk-1 and mek-1 together. Mg(2+) is required as a cofactor. Post-translationally, may be phosphorylated at Ser-221 and/or Ser-225 by mlk-1. As to expression, expressed in pharyngeal muscles, uterine endothelial cells, intestine and in neurons of ring ganglia, ventral ganglion and ganglia around anus. Expressed also in hypodermis and body muscles.

It catalyses the reaction L-seryl-[protein] + ATP = O-phospho-L-seryl-[protein] + ADP + H(+). The enzyme catalyses L-threonyl-[protein] + ATP = O-phospho-L-threonyl-[protein] + ADP + H(+). It carries out the reaction L-tyrosyl-[protein] + ATP = O-phospho-L-tyrosyl-[protein] + ADP + H(+). Its activity is regulated as follows. May be activated by phosphorylation at Ser-221 and Ser-225. Dual specificity protein kinase which may phosphorylate kgb-1 and thereby is an essential component of the JNK pathway composed of mlk-1, mek-1 and kgb-1. May also have a synergistic role with sek-1 in phosphorylating pmk-1. Involved in the response to environmental stress including heavy metal ions (Cu(2+) and Cd(2+)), oxidative stress and starvation. In association with sek-1, regulates germline cell apoptosis in response to oxidative, osmotic and heat shock stresses. Involved in resistance to pathogenic bacteria infection. Involved in axon regeneration after injury. In Caenorhabditis elegans, this protein is Dual specificity mitogen-activated protein kinase kinase mek-1.